The following is a 451-amino-acid chain: uncharacterized protein (451 aa).

A signal peptide spans 1–22; it reads MKLKLIFSLFLVLVFCSLFVFG. N-linked (GlcNAc...) asparagine glycosylation is found at asparagine 25, asparagine 45, asparagine 209, asparagine 326, and asparagine 402.

It localises to the secreted. This is an uncharacterized protein from Dictyostelium discoideum (Social amoeba).